A 1947-amino-acid chain; its full sequence is DNA-directed RNA polymerase subunit beta' (1947 aa).

The Zn(2+) site is built by Cys119, Cys121, Cys141, and Cys144. Mg(2+) is bound by residues Asp1778, Asp1780, and Asp1782.

It belongs to the RNA polymerase beta' chain family. RpoC1 subfamily. In plastids the minimal PEP RNA polymerase catalytic core is composed of four subunits: alpha, beta, beta', and beta''. When a (nuclear-encoded) sigma factor is associated with the core the holoenzyme is formed, which can initiate transcription. Mg(2+) serves as cofactor. The cofactor is Zn(2+).

Its subcellular location is the plastid. The protein localises to the chloroplast. The catalysed reaction is RNA(n) + a ribonucleoside 5'-triphosphate = RNA(n+1) + diphosphate. Functionally, DNA-dependent RNA polymerase catalyzes the transcription of DNA into RNA using the four ribonucleoside triphosphates as substrates. The sequence is that of DNA-directed RNA polymerase subunit beta' from Oedogonium cardiacum (Filamentous green alga).